An 83-amino-acid polypeptide reads, in one-letter code: UPF0248 protein TGAM_1209 (83 aa).

Belongs to the UPF0248 family.

This chain is UPF0248 protein TGAM_1209, found in Thermococcus gammatolerans (strain DSM 15229 / JCM 11827 / EJ3).